The sequence spans 187 residues: Small ribosomal subunit protein uS10m (187 aa).

Belongs to the universal ribosomal protein uS10 family. As to quaternary structure, component of the mitochondrial ribosome small subunit (28S) which comprises a 12S rRNA and about 30 distinct proteins.

Its subcellular location is the mitochondrion. The protein is Small ribosomal subunit protein uS10m (mrps10) of Danio rerio (Zebrafish).